The following is a 170-amino-acid chain: uncharacterized protein (170 aa).

The protein localises to the mitochondrion. This is an uncharacterized protein from Arabidopsis thaliana (Mouse-ear cress).